Consider the following 281-residue polypeptide: Proline iminopeptidase PfmaB (281 aa).

Residues 23–267 form the AB hydrolase-1 domain; it reads PLVITLHGGR…NANHSVHVEK (245 aa).

It belongs to the peptidase S33 family.

The enzyme catalyses Release of N-terminal proline from a peptide.. Its function is as follows. Proline iminopeptidase; part of the gene cluster that mediates the biosynthesis of dihydroxynaphthalene (DHN)-melanin, a bluish-green pigment forming a dark layer in the conidial wall that protects the conidia from UV radiations. The first step of the pathway is the production of the pentaketide 1,3,6,8-tetrahydroxynaphthalene (1,3,6,8-THN or T4HN) by the polyketide synthase PfmaE though condensation of acetyl-CoA with malonyl-CoA. T4HN is not stable and easily oxidizes into the stable form flaviolin. T4HN is also substrate of the hydroxynaphthalene reductase PfmaG to yield scytalone. The scytalone dehydratase PfmaJ then reduces scytalone to 1,3,8-THN. 1,3,8-THN is then substrate of the hydroxynaphthalene reductase PfmaI to yield vermelone. Vermelone is further converted by the multicopper oxidase PfmaD to 1,8-DHN. Finally the laccase PFICI_06862 transforms 1,8-DHN to DHN-melanin. The roles of the 5-oxoprolinase PfmaA and the proline iminopeptidase PfmaB within the cluster have not been elucidated yet. The sequence is that of Proline iminopeptidase PfmaB from Pestalotiopsis fici (strain W106-1 / CGMCC3.15140).